The following is a 296-amino-acid chain: 4-diphosphocytidyl-2-C-methyl-D-erythritol kinase (296 aa).

Residue lysine 19 is part of the active site. 102–112 (PMGAGLGGGSS) provides a ligand contact to ATP. Aspartate 144 is an active-site residue.

The protein belongs to the GHMP kinase family. IspE subfamily.

It catalyses the reaction 4-CDP-2-C-methyl-D-erythritol + ATP = 4-CDP-2-C-methyl-D-erythritol 2-phosphate + ADP + H(+). It participates in isoprenoid biosynthesis; isopentenyl diphosphate biosynthesis via DXP pathway; isopentenyl diphosphate from 1-deoxy-D-xylulose 5-phosphate: step 3/6. Catalyzes the phosphorylation of the position 2 hydroxy group of 4-diphosphocytidyl-2C-methyl-D-erythritol. The sequence is that of 4-diphosphocytidyl-2-C-methyl-D-erythritol kinase from Burkholderia pseudomallei (strain 1710b).